The chain runs to 496 residues: Ribose import ATP-binding protein RbsA (496 aa).

ABC transporter domains follow at residues 3 to 239 (IVME…VGRE) and 246 to 493 (ERTP…TGGN). 35–42 (GENGAGKS) serves as a coordination point for ATP.

It belongs to the ABC transporter superfamily. Ribose importer (TC 3.A.1.2.1) family. The complex is composed of an ATP-binding protein (RbsA), two transmembrane proteins (RbsC) and a solute-binding protein (RbsB).

It localises to the cell membrane. It carries out the reaction D-ribose(out) + ATP + H2O = D-ribose(in) + ADP + phosphate + H(+). Part of the ABC transporter complex RbsABC involved in ribose import. Responsible for energy coupling to the transport system. This is Ribose import ATP-binding protein RbsA from Oceanobacillus iheyensis (strain DSM 14371 / CIP 107618 / JCM 11309 / KCTC 3954 / HTE831).